We begin with the raw amino-acid sequence, 371 residues long: Ferrochelatase (371 aa).

2 residues coordinate Fe cation: histidine 218 and glutamate 299.

The protein belongs to the ferrochelatase family.

The protein localises to the cytoplasm. It catalyses the reaction heme b + 2 H(+) = protoporphyrin IX + Fe(2+). Its pathway is porphyrin-containing compound metabolism; protoheme biosynthesis; protoheme from protoporphyrin-IX: step 1/1. Catalyzes the ferrous insertion into protoporphyrin IX. The sequence is that of Ferrochelatase from Cupriavidus metallidurans (strain ATCC 43123 / DSM 2839 / NBRC 102507 / CH34) (Ralstonia metallidurans).